A 409-amino-acid polypeptide reads, in one-letter code: MSIGVQSSGINISNAELSRLVDAGMSELGGKAVRDDGRALARAEAALAAVVGERVSPRRDAGAGAQRVELAQPKPAAQTRATDRRTVSGMEREHRRLAASQMPAVTGMHEALVQRHVSPGGAKTPGEGGATRVGGDAPRFSFAEDKAFDAMIALGIAMQKNVQSDLVMQGKLTTLAHDAMMSAAAQDRSIGAAQMTAAIAGGALQAATSLGGAVQQMKGLGTKSMSIEKELKPQAELKQFHAEQALELRGINKPVLSNDEVSHVKVKRETGESVRHEIDPGGERMSDEHASVLAQEAPARQHRIDMHGMRHEQNLVKAGRQQMKGDLIQSGGQVGKNQIDGASAQQQGAERAEQKEDESAQQTAMAAASARDEAAHRGRDAAQKAIDAAKSQVANDNAVAAQVAGNLRT.

Disordered stretches follow at residues 268–287 and 330–396; these read RETG…RMSD and SGGQ…VAND. Positions 360–369 are enriched in low complexity; that stretch reads AQQTAMAAAS. The segment covering 370 to 382 has biased composition (basic and acidic residues); sequence ARDEAAHRGRDAA.

This sequence belongs to the SctB/SipC family.

The protein localises to the secreted. This chain is Effector protein BipC (bipC), found in Burkholderia thailandensis (strain ATCC 700388 / DSM 13276 / CCUG 48851 / CIP 106301 / E264).